Reading from the N-terminus, the 141-residue chain is Hemoglobin subunit alpha-D (141 aa).

In terms of domain architecture, Globin spans 1–141 (MLTAEDKKLI…VAAVLAEKYR (141 aa)). Residues His-58 and His-87 each contribute to the heme b site.

Belongs to the globin family. Heterotetramer of two alpha-D chains and two beta chains. In terms of tissue distribution, red blood cells.

Functionally, involved in oxygen transport from the lung to the various peripheral tissues. The chain is Hemoglobin subunit alpha-D (HBAD) from Accipiter gentilis (Northern goshawk).